Reading from the N-terminus, the 591-residue chain is CTP synthase 1 (591 aa).

Positions 300-554 (SIALVGKYTK…LAAAGRLQSY (255 aa)) constitute a Glutamine amidotransferase type-1 domain. Residues C399, H526, and E528 each act as for GATase activity in the active site. A phosphoserine mark is found at S571 and S575.

It belongs to the CTP synthase family.

The enzyme catalyses UTP + L-glutamine + ATP + H2O = CTP + L-glutamate + ADP + phosphate + 2 H(+). It functions in the pathway pyrimidine metabolism; CTP biosynthesis via de novo pathway; CTP from UDP: step 2/2. In terms of biological role, this enzyme is involved in the de novo synthesis of CTP, a precursor of DNA, RNA and phospholipids. Catalyzes the ATP-dependent amination of UTP to CTP with either L-glutamine or ammonia as a source of nitrogen. This chain is CTP synthase 1 (ctps1), found in Danio rerio (Zebrafish).